We begin with the raw amino-acid sequence, 162 residues long: Large ribosomal subunit protein uL10 (162 aa).

This sequence belongs to the universal ribosomal protein uL10 family. As to quaternary structure, part of the ribosomal stalk of the 50S ribosomal subunit. The N-terminus interacts with L11 and the large rRNA to form the base of the stalk. The C-terminus forms an elongated spine to which L12 dimers bind in a sequential fashion forming a multimeric L10(L12)X complex.

Its function is as follows. Forms part of the ribosomal stalk, playing a central role in the interaction of the ribosome with GTP-bound translation factors. The sequence is that of Large ribosomal subunit protein uL10 from Vibrio cholerae serotype O1 (strain ATCC 39541 / Classical Ogawa 395 / O395).